The primary structure comprises 286 residues: MAGAKEIKTKIASVKNTQKITSAMEMVAASKMRRAQERMAASRPYAESMRKVIGHVAQGSLEYKHPYLEVREAKRVGYIVVATDRGLCGGLNVNLFKKVLLDLKNWKEQGAEVEFCPIGARSVQFFKSFGGTMPAHASGLGDAPSIADLIGTVRVMLKAYNEGKLDRLFIVFNKFVNTMTQAPVIEQLLPLPKSEEVANKHPWDYIYEPDPKVLLDTLLVRYIESQVYQGVVENIASEQAARMVAMKAATDNAGELINDLQLVYNKARQAAITQELSEIVSGASAV.

This sequence belongs to the ATPase gamma chain family. As to quaternary structure, F-type ATPases have 2 components, CF(1) - the catalytic core - and CF(0) - the membrane proton channel. CF(1) has five subunits: alpha(3), beta(3), gamma(1), delta(1), epsilon(1). CF(0) has three main subunits: a, b and c.

It is found in the cell inner membrane. Its function is as follows. Produces ATP from ADP in the presence of a proton gradient across the membrane. The gamma chain is believed to be important in regulating ATPase activity and the flow of protons through the CF(0) complex. This Shewanella putrefaciens (strain CN-32 / ATCC BAA-453) protein is ATP synthase gamma chain.